We begin with the raw amino-acid sequence, 83 residues long: High-potential iron-sulfur protein (83 aa).

Residues Cys43, Cys46, Cys61, and Cys75 each coordinate [4Fe-4S] cluster.

This sequence belongs to the high-potential iron-sulfur protein (HiPIP) family. In terms of assembly, homodimer.

It is found in the periplasm. In terms of biological role, specific class of high-redox-potential 4Fe-4S ferredoxins. Functions in anaerobic electron transport in most purple and in some other photosynthetic bacteria and in at least one genus (Paracoccus) of halophilic, denitrifying bacteria. The chain is High-potential iron-sulfur protein (hip) from Marichromatium gracile (Chromatium gracile).